Consider the following 191-residue polypeptide: Prostaglandin-H2 D-isomerase (191 aa).

The N-terminal stretch at 1–28 (MATPNRLWMALLLLGVLGVLQTPAPAQA) is a signal peptide. A glycan (N-linked (GlcNAc...) asparagine) is linked at Asn-51. Cys-65 functions as the Nucleophile in the catalytic mechanism. Residue Asn-78 is glycosylated (N-linked (GlcNAc...) asparagine). Cysteines 89 and 186 form a disulfide.

Belongs to the calycin superfamily. Lipocalin family. As to quaternary structure, monomer. As to expression, in the male reproductive system, expressed in the testis, epididymis and prostate, and secreted into the seminal fluid.

The protein resides in the rough endoplasmic reticulum. The protein localises to the nucleus membrane. Its subcellular location is the golgi apparatus. It localises to the cytoplasm. It is found in the perinuclear region. The protein resides in the secreted. The enzyme catalyses prostaglandin H2 = prostaglandin D2. In terms of biological role, catalyzes the conversion of PGH2 to PGD2, a prostaglandin involved in smooth muscle contraction/relaxation and a potent inhibitor of platelet aggregation. Involved in a variety of CNS functions, such as sedation, NREM sleep and PGE2-induced allodynia, and may have an anti-apoptotic role in oligodendrocytes. Binds small non-substrate lipophilic molecules, including biliverdin, bilirubin, retinal, retinoic acid and thyroid hormone, and may act as a scavenger for harmful hydrophobic molecules and as a secretory retinoid and thyroid hormone transporter. Possibly involved in development and maintenance of the blood-brain, blood-retina, blood-aqueous humor and blood-testis barrier. It is likely to play important roles in both maturation and maintenance of the central nervous system and male reproductive system. Involved in PLA2G3-dependent maturation of mast cells. PLA2G3 is secreted by immature mast cells and acts on nearby fibroblasts upstream to PTDGS to synthesize PGD2, which in turn promotes mast cell maturation and degranulation via PTGDR. This is Prostaglandin-H2 D-isomerase (PTGDS) from Bos taurus (Bovine).